The sequence spans 159 residues: SsrA-binding protein (159 aa).

Residues 138–153 (KREDGKDKDWSREKER) show a composition bias toward basic and acidic residues. The tract at residues 138 to 159 (KREDGKDKDWSREKERLMKHKA) is disordered.

The protein belongs to the SmpB family.

The protein resides in the cytoplasm. Functionally, required for rescue of stalled ribosomes mediated by trans-translation. Binds to transfer-messenger RNA (tmRNA), required for stable association of tmRNA with ribosomes. tmRNA and SmpB together mimic tRNA shape, replacing the anticodon stem-loop with SmpB. tmRNA is encoded by the ssrA gene; the 2 termini fold to resemble tRNA(Ala) and it encodes a 'tag peptide', a short internal open reading frame. During trans-translation Ala-aminoacylated tmRNA acts like a tRNA, entering the A-site of stalled ribosomes, displacing the stalled mRNA. The ribosome then switches to translate the ORF on the tmRNA; the nascent peptide is terminated with the 'tag peptide' encoded by the tmRNA and targeted for degradation. The ribosome is freed to recommence translation, which seems to be the essential function of trans-translation. The protein is SsrA-binding protein of Pseudoalteromonas translucida (strain TAC 125).